The chain runs to 400 residues: Queuine tRNA-ribosyltransferase (400 aa).

The active-site Proton acceptor is Asp93. Residues 93–97 (DSGGF), Asp166, and Gly247 each bind substrate. Positions 277–283 (GIGDVDD) are RNA binding. The active-site Nucleophile is Asp296. The RNA binding; important for wobble base 34 recognition stretch occupies residues 301 to 305 (TRLGR). Residues Cys338, Cys340, Cys343, and His369 each coordinate Zn(2+).

It belongs to the queuine tRNA-ribosyltransferase family. In terms of assembly, homodimer. Within each dimer, one monomer is responsible for RNA recognition and catalysis, while the other monomer binds to the replacement base PreQ1. The cofactor is Zn(2+).

It catalyses the reaction 7-aminomethyl-7-carbaguanine + guanosine(34) in tRNA = 7-aminomethyl-7-carbaguanosine(34) in tRNA + guanine. It functions in the pathway tRNA modification; tRNA-queuosine biosynthesis. Functionally, catalyzes the base-exchange of a guanine (G) residue with the queuine precursor 7-aminomethyl-7-deazaguanine (PreQ1) at position 34 (anticodon wobble position) in tRNAs with GU(N) anticodons (tRNA-Asp, -Asn, -His and -Tyr). Catalysis occurs through a double-displacement mechanism. The nucleophile active site attacks the C1' of nucleotide 34 to detach the guanine base from the RNA, forming a covalent enzyme-RNA intermediate. The proton acceptor active site deprotonates the incoming PreQ1, allowing a nucleophilic attack on the C1' of the ribose to form the product. After dissociation, two additional enzymatic reactions on the tRNA convert PreQ1 to queuine (Q), resulting in the hypermodified nucleoside queuosine (7-(((4,5-cis-dihydroxy-2-cyclopenten-1-yl)amino)methyl)-7-deazaguanosine). This chain is Queuine tRNA-ribosyltransferase, found in Roseiflexus sp. (strain RS-1).